The chain runs to 548 residues: (S)-beta-macrocarpene synthase (548 aa).

2 residues coordinate Mg(2+): Asp-302 and Asp-306. The substrate site is built by Asp-302, Asp-306, Arg-443, and Asn-446. The DDXXD motif signature appears at 302–306 (DDTLD). 3 residues coordinate Mg(2+): Asn-446, Ser-450, and Glu-454.

This sequence belongs to the terpene synthase family. Monomer. Mg(2+) serves as cofactor. The cofactor is Mn(2+). As to expression, expressed in roots. Not detected in leaves, unless damaged by herbivory or infected by fungi.

Its subcellular location is the cytoplasm. It carries out the reaction (S)-beta-bisabolene = (S)-beta-macrocarpene. The enzyme catalyses (2E,6E)-farnesyl diphosphate = (S)-beta-bisabolene + diphosphate. It catalyses the reaction (2E)-geranyl diphosphate = (4S)-limonene + diphosphate. The catalysed reaction is (2E)-geranyl diphosphate = beta-myrcene + diphosphate. It carries out the reaction (2E)-geranyl diphosphate = terpinolene + diphosphate. The enzyme catalyses (2E)-geranyl diphosphate + H2O = (S)-linalool + diphosphate. Its pathway is secondary metabolite biosynthesis; terpenoid biosynthesis. In terms of biological role, involved in the biosynthesis of the bicyclic sesquiterpene (S)-beta-macrocarpene. Can use both geranyl diphosphate and farnesyl diphosphate as substrate, but not geranylgeranyl diphosphate. Produces mainly (S)-beta-macrocarpene, but also smaller amounts of beta-bisabolene and (E)-beta-farnesene when used with farnesyl diphosphate as substrate. In the presence of geranyl diphosphate, produces the acyclic monoterpenes beta-myrcene and linalool along with minor amounts of the cyclic compounds limonene, alpha-thujene, sabinene and alpha-terpinolene. May be involved in plant defense. The sequence is that of (S)-beta-macrocarpene synthase from Zea mays (Maize).